Reading from the N-terminus, the 472-residue chain is Deoxyribodipyrimidine photo-lyase (472 aa).

The Photolyase/cryptochrome alpha/beta domain occupies 2-134 (TTHLVWFRQD…VCEGFDDSVI (133 aa)). Positions 109 and 110 each coordinate (6R)-5,10-methylene-5,6,7,8-tetrahydrofolate. Tyr-223 serves as a coordination point for FAD. Position 227 (Arg-227) interacts with DNA. Residues 235–239 (TSRLS), Trp-272, and 275–282 (ELIWREFY) contribute to the FAD site. 2 interaction with DNA regions span residues 275 to 282 (ELIWREFY) and 342 to 343 (NR). 373–375 (DGD) contacts FAD. Gln-405 is a DNA binding site.

The protein belongs to the DNA photolyase class-1 family. Monomer. It depends on FAD as a cofactor. Requires (6R)-5,10-methylene-5,6,7,8-tetrahydrofolate as cofactor.

It carries out the reaction cyclobutadipyrimidine (in DNA) = 2 pyrimidine residues (in DNA).. Involved in repair of UV radiation-induced DNA damage. Catalyzes the light-dependent monomerization (300-600 nm) of cyclobutyl pyrimidine dimers (in cis-syn configuration), which are formed between adjacent bases on the same DNA strand upon exposure to ultraviolet radiation. The protein is Deoxyribodipyrimidine photo-lyase (phrB) of Escherichia coli (strain K12).